Reading from the N-terminus, the 88-residue chain is Small ribosomal subunit protein bS20 (88 aa).

The segment at 1–21 (MANSAQAKKRARQNVKARKHN) is disordered. Residues 7-21 (AKKRARQNVKARKHN) are compositionally biased toward basic residues.

Belongs to the bacterial ribosomal protein bS20 family.

Its function is as follows. Binds directly to 16S ribosomal RNA. This chain is Small ribosomal subunit protein bS20, found in Acinetobacter baumannii (strain AB307-0294).